Here is a 277-residue protein sequence, read N- to C-terminus: Energy-coupling factor transporter ATP-binding protein EcfA1 (277 aa).

Positions 5–242 constitute an ABC transporter domain; it reads VKVNNISFEY…IKMLKEIGLD (238 aa). 41–48 serves as a coordination point for ATP; it reads GHNGSGKS.

This sequence belongs to the ABC transporter superfamily. Energy-coupling factor EcfA family. As to quaternary structure, forms a stable energy-coupling factor (ECF) transporter complex composed of 2 membrane-embedded substrate-binding proteins (S component), 2 ATP-binding proteins (A component) and 2 transmembrane proteins (T component).

The protein resides in the cell membrane. Its function is as follows. ATP-binding (A) component of a common energy-coupling factor (ECF) ABC-transporter complex. Unlike classic ABC transporters this ECF transporter provides the energy necessary to transport a number of different substrates. The sequence is that of Energy-coupling factor transporter ATP-binding protein EcfA1 from Clostridioides difficile (strain 630) (Peptoclostridium difficile).